The following is a 117-amino-acid chain: Large ribosomal subunit protein bL19 (117 aa).

The protein belongs to the bacterial ribosomal protein bL19 family.

In terms of biological role, this protein is located at the 30S-50S ribosomal subunit interface and may play a role in the structure and function of the aminoacyl-tRNA binding site. This is Large ribosomal subunit protein bL19 from Vesicomyosocius okutanii subsp. Calyptogena okutanii (strain HA).